Here is a 545-residue protein sequence, read N- to C-terminus: Glucose-6-phosphate isomerase (545 aa).

Residue E351 is the Proton donor of the active site. Catalysis depends on residues H382 and K510.

This sequence belongs to the GPI family.

The protein localises to the cytoplasm. It carries out the reaction alpha-D-glucose 6-phosphate = beta-D-fructose 6-phosphate. Its pathway is carbohydrate biosynthesis; gluconeogenesis. It functions in the pathway carbohydrate degradation; glycolysis; D-glyceraldehyde 3-phosphate and glycerone phosphate from D-glucose: step 2/4. Catalyzes the reversible isomerization of glucose-6-phosphate to fructose-6-phosphate. This Shewanella amazonensis (strain ATCC BAA-1098 / SB2B) protein is Glucose-6-phosphate isomerase.